The sequence spans 144 residues: Transcription antitermination protein NusB (144 aa).

It belongs to the NusB family.

In terms of biological role, involved in transcription antitermination. Required for transcription of ribosomal RNA (rRNA) genes. Binds specifically to the boxA antiterminator sequence of the ribosomal RNA (rrn) operons. The chain is Transcription antitermination protein NusB from Streptococcus agalactiae serotype Ia (strain ATCC 27591 / A909 / CDC SS700).